The primary structure comprises 354 residues: Protein Wnt-9a (354 aa).

Positions Met1 to Pro15 are cleaved as a signal peptide. 5 disulfides stabilise this stretch: Cys85–Cys96, Cys133–Cys141, Cys143–Cys160, Cys207–Cys221, and Cys209–Cys216. A glycan (N-linked (GlcNAc...) asparagine) is linked at Asn95. Residue Ser213 is the site of O-palmitoleoyl serine; by PORCN attachment. Residues Gly246–Gln271 are disordered. Disulfide bonds link Cys288–Cys313, Cys302–Cys308, Cys312–Cys352, Cys328–Cys343, Cys330–Cys340, and Cys335–Cys336.

It belongs to the Wnt family. Palmitoleoylation is required for efficient binding to frizzled receptors. Depalmitoleoylation leads to Wnt signaling pathway inhibition.

It is found in the secreted. Its subcellular location is the extracellular space. The protein localises to the extracellular matrix. Ligand for members of the frizzled family of seven transmembrane receptors. Functions in the canonical Wnt/beta-catenin signaling pathway. Plays a role in embryonic chondrocyte maturation and in embryonic bone mineralization. The protein is Protein Wnt-9a (WNT9A) of Gallus gallus (Chicken).